The chain runs to 89 residues: uncharacterized protein (89 aa).

An HTH arsR-type domain is found at 1–89 (MEKYEKAAEI…KEIIKLVDEL (89 aa)).

This is an uncharacterized protein from Methanocaldococcus jannaschii (strain ATCC 43067 / DSM 2661 / JAL-1 / JCM 10045 / NBRC 100440) (Methanococcus jannaschii).